The sequence spans 254 residues: DNA-3-methyladenine glycosylase (254 aa).

Residues 1 to 10 are compositionally biased toward basic residues; the sequence is MKTPARRSKR. The disordered stretch occupies residues 1 to 20; sequence MKTPARRSKRVNQEESETNV.

Belongs to the DNA glycosylase MPG family.

It is found in the nucleus. The catalysed reaction is Hydrolysis of alkylated DNA, releasing 3-methyladenine, 3-methylguanine, 7-methylguanine and 7-methyladenine.. In terms of biological role, hydrolysis of the deoxyribose N-glycosidic bond to excise 3-methyladenine, and 7-methylguanine from the damaged DNA polymer formed by alkylation lesions. This chain is DNA-3-methyladenine glycosylase (MAG), found in Arabidopsis thaliana (Mouse-ear cress).